The following is a 252-amino-acid chain: Chitooligosaccharide deacetylase (252 aa).

Residues His61 and His125 each contribute to the Mg(2+) site.

This sequence belongs to the YdjC deacetylase family. ChbG subfamily. Homodimer. Mg(2+) is required as a cofactor.

The protein localises to the cytoplasm. The enzyme catalyses N,N'-diacetylchitobiose + H2O = N-acetyl-beta-D-glucosaminyl-(1-&gt;4)-D-glucosamine + acetate. It carries out the reaction diacetylchitobiose-6'-phosphate + H2O = N'-monoacetylchitobiose-6'-phosphate + acetate. It participates in glycan degradation; chitin degradation. Functionally, involved in the degradation of chitin. ChbG is essential for growth on the acetylated chitooligosaccharides chitobiose and chitotriose but is dispensable for growth on cellobiose and chitosan dimer, the deacetylated form of chitobiose. Deacetylation of chitobiose-6-P and chitotriose-6-P is necessary for both the activation of the chb promoter by the regulatory protein ChbR and the hydrolysis of phosphorylated beta-glucosides by the phospho-beta-glucosidase ChbF. Catalyzes the removal of only one acetyl group from chitobiose-6-P to yield monoacetylchitobiose-6-P, the inducer of ChbR and the substrate of ChbF. This is Chitooligosaccharide deacetylase from Salmonella newport (strain SL254).